A 744-amino-acid chain; its full sequence is Collagen alpha-1(VIII) chain (744 aa).

Residues 1-24 (MAVPPRPLQLLGILFIISLNSVRL) form the signal peptide. The segment at 29-118 (AYYGIKPLPP…KGEVPLASLR (90 aa)) is nonhelical region (NC2). The segment covering 101–110 (KEVVPKKGKG) has biased composition (basic and acidic residues). Disordered regions lie at residues 101–395 (KEVV…EPGL), 412–439 (GPKG…GFPG), and 457–590 (GPIG…DMGL). Residues 119–572 (GEQGPRGEPG…PGPPGPPGPP (454 aa)) are triple-helical region (COL1). The segment covering 129 to 138 (PRGPPGPPGL) has biased composition (pro residues). A compositionally biased stretch (low complexity) spans 169-191 (KPGAMGMPGAKGEIGPKGEIGPM). A compositionally biased stretch (gly residues) spans 204 to 218 (GLPGIGKPGGPGLPG). The segment covering 298 to 307 (PQGLIGVPGV) has biased composition (low complexity). 2 stretches are compositionally biased toward gly residues: residues 329-338 (GFPGGKGEQG) and 412-421 (GPKGEGGVVG). Composition is skewed to low complexity over residues 470 to 507 (LPGL…VGPS) and 548 to 557 (PGALGPQGQP). The segment covering 559–579 (LPGPPGPPGPPGPPAVMPTPS) has biased composition (pro residues). The segment at 573 to 744 (AVMPTPSPQG…SFSGYLLYPM (172 aa)) is nonhelical region (NC1). A C1q domain is found at 611-744 (PAYEMPAFTA…SFSGYLLYPM (134 aa)).

Homotrimers, or heterotrimers in association with alpha 2(VIII) type collagens. Four homotrimers can form a tetrahedron stabilized by central interacting C-terminal NC1 trimers. Prolines at the third position of the tripeptide repeating unit (G-X-Y) are hydroxylated in some or all of the chains. Post-translationally, proteolytically cleaved by neutrophil elastase, in vitro. Proteolytic processing produces the C-terminal NC1 domain fragment, vastatin. As to expression, high levels in calvarium, eye and skin of newborn mice; also in various epithelial, endothelial and mesenchymal cells.

It localises to the secreted. The protein resides in the extracellular space. Its subcellular location is the extracellular matrix. It is found in the basement membrane. Functionally, macromolecular component of the subendothelium. Major component of the Descemet's membrane (basement membrane) of corneal endothelial cells. Also a component of the endothelia of blood vessels. Necessary for migration and proliferation of vascular smooth muscle cells and thus, has a potential role in the maintenance of vessel wall integrity and structure, in particular in atherogenesis. In terms of biological role, vastatin, the C-terminal fragment comprising the NC1 domain, inhibits aortic endothelial cell proliferation and causes cell apoptosis. In Mus musculus (Mouse), this protein is Collagen alpha-1(VIII) chain (Col8a1).